Reading from the N-terminus, the 765-residue chain is Amyloid beta precursor like protein 2 (765 aa).

An N-terminal signal peptide occupies residues 1-31 (MAATGTAAAAATGKLLVLLLLGLTAPAAALA). The Extracellular portion of the chain corresponds to 32-695 (GYIEALAANA…LREDFSLSSS (664 aa)). Residues 46-139 (AVAEPQIAMF…PFKCLVGEFV (94 aa)) are GFLD subdomain. Positions 46–205 (AVAEPQIAMF…HGTEYVCCPQ (160 aa)) constitute an E1 domain. Cystine bridges form between C56-C80, C91-C133, C116-C123, C149-C203, C160-C190, and C174-C202. The tract at residues 147-205 (ENCQFFHQERMEVCEKHQRWHTVVKEACLTEGMTLYSYGMLLPCGVDQFHGTEYVCCPQ) is cuBD subdomain. 3 residues coordinate Cu cation: H163, H167, and Y184. The interval 211-301 (SDSTMSKEEE…EPSSDGTISD (91 aa)) is disordered. Residue S216 is modified to Phosphoserine. Composition is skewed to acidic residues over residues 218-231 (EEEEEEEEDEEEDY) and 240-271 (TEADLEDFTEAAADEDEDEEEEEEEEGEEVVE). A compositionally biased stretch (basic and acidic residues) spans 272-284 (DRDYYYDSFKGDD). The BPTI/Kunitz inhibitor domain maps to 308–366 (VKAVCSQEAMTGPCRAVMPRWYFDLSKGKCVRFIYGGCGGNRNNFESEDYCMAVCKTMI). Intrachain disulfides connect C312/C362, C321/C345, and C337/C358. The E2 domain maps to 375–566 (DVDVYFETSA…QEIQEEIDEL (192 aa)). The residue at position 592 (S592) is a Phosphoserine. The disordered stretch occupies residues 597-616 (EIPPFHPFHPFPSLSENEDT). Residue S628 is glycosylated (O-linked (Xyl...) (chondroitin sulfate) serine). Residues 696–718 (ALIGLLVIAVAIATVIVISLVML) traverse the membrane as a helical segment. Residues 719-765 (RKRQYGTISHGIVEVHPMLTPEERHLNKMQNHGYENPTYKYLEQMQI) are Cytoplasmic-facing. The tract at residues 751 to 765 (GYENPTYKYLEQMQI) is interaction with DAB2. The short motif at 752–757 (YENPTY) is the NPXY motif element.

It belongs to the APP family. Interacts with CPEB1. Interacts (via NPXY motif) with DAB2 (via PID domain); the interaction is impaired by tyrosine phosphorylation of the NPXY motif. Interacts (via cytoplasmic domain) with APBB2/FE65L. Interacts (via intracellular domain) with APBB3/FE65L2.

It is found in the membrane. Functionally, may play a role in the regulation of hemostasis. The soluble form may have inhibitory properties towards coagulation factors. May interact with cellular G-protein signaling pathways. May bind to the DNA 5'-GTCACATG-3'(CDEI box). Inhibits trypsin, chymotrypsin, plasmin, factor XIA and plasma and glandular kallikrein. Modulates the Cu/Zn nitric oxide-catalyzed autodegradation of GPC1 heparan sulfate side chains in fibroblasts. This chain is Amyloid beta precursor like protein 2, found in Rattus norvegicus (Rat).